The chain runs to 501 residues: 4,4'-diapophytoene desaturase (4,4'-diaponeurosporene-forming) (501 aa).

Position 5-17 (5-17) interacts with FAD; the sequence is VVGAGVTGLAAAA.

It belongs to the carotenoid/retinoid oxidoreductase family. CrtN subfamily.

The catalysed reaction is 15-cis-4,4'-diapophytoene + 3 FAD + 3 H(+) = all-trans-4,4'-diaponeurosporene + 3 FADH2. The protein operates within carotenoid biosynthesis; staphyloxanthin biosynthesis; staphyloxanthin from farnesyl diphosphate: step 2/5. Functionally, involved in the biosynthesis of the yellow-orange carotenoid staphyloxanthin, which plays a role in the virulence via its protective function against oxidative stress. Catalyzes three successive dehydrogenation reactions that lead to the introduction of three double bonds into 4,4'-diapophytoene (dehydrosqualene), with 4,4'-diapophytofluene and 4,4'-diapo-zeta-carotene as intermediates, and 4,4'-diaponeurosporene (the major deep-yellow pigment in staphylococci strains) as the end product. The chain is 4,4'-diapophytoene desaturase (4,4'-diaponeurosporene-forming) from Staphylococcus haemolyticus (strain JCSC1435).